We begin with the raw amino-acid sequence, 257 residues long: Flap endonuclease Xni (257 aa).

A Mg(2+)-binding site is contributed by Asp109. A 5'-3' exonuclease domain is found at 165-254 (VKPEQLADYW…GFNLQDIRYE (90 aa)). 4 residues coordinate K(+): Leu176, Pro185, Ile187, and Ile190. The interval 189–194 (GIGPKA) is interaction with DNA.

Belongs to the Xni family. The cofactor is Mg(2+). It depends on K(+) as a cofactor.

In terms of biological role, has flap endonuclease activity. During DNA replication, flap endonucleases cleave the 5'-overhanging flap structure that is generated by displacement synthesis when DNA polymerase encounters the 5'-end of a downstream Okazaki fragment. The protein is Flap endonuclease Xni of Vibrio atlanticus (strain LGP32) (Vibrio splendidus (strain Mel32)).